The chain runs to 574 residues: MNHDQAVLNRVWCNTLLEELARSGVEHVCVAPGSRSTPLTLEAEANPKLTLHTHFDERGLGFLALGLAKASNKPVAVIVTSGTAVANLLPATAESGLTREKLILLTSDRPIDLVDCGANQAIQQQGIFSSHVESALNLPSPTTQISLNWLLTSVDNALAKQRNVGGAIHINCPFPEPLYSANSAEMYAEYTSSISGWKSGTACYSQTFLPNQVNTQPIAPSEYLGRKGVVILGSLDIEQATKAQQFATALGWPVFCDPQSGVTSDWKHYDLWMQSDVAKAQLNQCDFILQFGERVVSKRLNHWIKSQASSFCSSQYIVVSPDTHRINQDHLPQTHIVADIESWVSEQHLPTLLGQHAGWAAPLVEIANTVQQLALAQISNNDQLTELSVAVDLSTRLKDRELFVGNSLMVRLVDMLSSISANQVYSNRGASGIDGLVATAAGVVKANQNPLIMLIGDTSLLYDLNSLALFTHNVTPMVIVVTNNDGGAIFDLLPVPEQQKQSLYQMPHGFSFEHAAAQFQLGYAAPETLNGYQTIVEQHFEQGQGTLLVEVKTPPEQAATLLKQFSAMLIEALA.

It belongs to the TPP enzyme family. MenD subfamily. Homodimer. Mg(2+) is required as a cofactor. Requires Mn(2+) as cofactor. It depends on thiamine diphosphate as a cofactor.

The catalysed reaction is isochorismate + 2-oxoglutarate + H(+) = 5-enolpyruvoyl-6-hydroxy-2-succinyl-cyclohex-3-ene-1-carboxylate + CO2. Its pathway is quinol/quinone metabolism; 1,4-dihydroxy-2-naphthoate biosynthesis; 1,4-dihydroxy-2-naphthoate from chorismate: step 2/7. The protein operates within quinol/quinone metabolism; menaquinone biosynthesis. Functionally, catalyzes the thiamine diphosphate-dependent decarboxylation of 2-oxoglutarate and the subsequent addition of the resulting succinic semialdehyde-thiamine pyrophosphate anion to isochorismate to yield 2-succinyl-5-enolpyruvyl-6-hydroxy-3-cyclohexene-1-carboxylate (SEPHCHC). The protein is 2-succinyl-5-enolpyruvyl-6-hydroxy-3-cyclohexene-1-carboxylate synthase of Vibrio atlanticus (strain LGP32) (Vibrio splendidus (strain Mel32)).